A 624-amino-acid chain; its full sequence is Membrane protein insertase YidC (624 aa).

A helical membrane pass occupies residues 8–28 (MIIAIALSLAVLLGWNYFVTA). The tract at residues 36 to 95 (QQQAAQVNPSQGVNPSQGVDPSQGVNASPSPKEGGPSAPVPGTLPGAAGGSPQAALARDE) is disordered. Over residues 43-64 (NPSQGVNPSQGVDPSQGVNASP) the composition is skewed to polar residues. A run of 5 helical transmembrane segments spans residues 370-390 (FDLL…FKAL), 396-416 (LFGN…LFFL), 470-490 (WPVL…FVTI), 526-542 (LLHL…TMFL), and 559-579 (FTFM…GLVI).

The protein belongs to the OXA1/ALB3/YidC family. Type 1 subfamily. Interacts with the Sec translocase complex via SecD. Specifically interacts with transmembrane segments of nascent integral membrane proteins during membrane integration.

It localises to the cell inner membrane. Required for the insertion and/or proper folding and/or complex formation of integral membrane proteins into the membrane. Involved in integration of membrane proteins that insert both dependently and independently of the Sec translocase complex, as well as at least some lipoproteins. Aids folding of multispanning membrane proteins. The sequence is that of Membrane protein insertase YidC from Methylobacterium sp. (strain 4-46).